Consider the following 54-residue polypeptide: Large ribosomal subunit protein bL33 (54 aa).

The protein belongs to the bacterial ribosomal protein bL33 family.

This Roseiflexus castenholzii (strain DSM 13941 / HLO8) protein is Large ribosomal subunit protein bL33.